Consider the following 293-residue polypeptide: MKILFSTIIGRPNVGKSTLLNNILEYDLAIVSSKPQATRDQIMGIYSDDDYQLIFTDTPGIYKTKTKFGENLNAQSYESLKDIDLVIFLSPANEEIGPGDEFICEKIKNFTNKIALITKIDLENSEEVLKKKAEKLKSLGFKEIFAISSKDHGSIKKLINEIKKYSYEGERQFDEDMITEKSEKFIAKESIREACIDLLEQELPHSILVEIDSFSEEEREEKNLVEIHSTIYVNKESQKGILIGKGGSKIKKIGISARKKIQRKLGVNVKLFLKIKVKKNWVNQEKIFKKFDN.

The 167-residue stretch at 2-168 (KILFSTIIGR…INEIKKYSYE (167 aa)) folds into the Era-type G domain. The tract at residues 10 to 17 (GRPNVGKS) is G1. Position 10-17 (10-17 (GRPNVGKS)) interacts with GTP. Residues 36–40 (QATRD) are G2. The G3 stretch occupies residues 57–60 (DTPG). GTP is bound by residues 57-61 (DTPGI) and 118-121 (TKID). The segment at 118–121 (TKID) is G4. Positions 147–149 (ISS) are G5. Residues 199–279 (LEQELPHSIL…KLFLKIKVKK (81 aa)) enclose the KH type-2 domain.

The protein belongs to the TRAFAC class TrmE-Era-EngA-EngB-Septin-like GTPase superfamily. Era GTPase family. Monomer.

It is found in the cytoplasm. The protein localises to the cell membrane. Its function is as follows. An essential GTPase that binds both GDP and GTP, with rapid nucleotide exchange. Plays a role in 16S rRNA processing and 30S ribosomal subunit biogenesis and possibly also in cell cycle regulation and energy metabolism. The sequence is that of GTPase Era from Mycoplasmopsis pulmonis (strain UAB CTIP) (Mycoplasma pulmonis).